Reading from the N-terminus, the 85-residue chain is Teretoxin Tan9.6 (85 aa).

Positions 1 to 21 (MMSKTGALLLTFMILVLFSMA) are cleaved as a signal peptide. Residues 22–52 (AADALGERFEDHEQKIREQDAGVGLLSLMGR) constitute a propeptide that is removed on maturation.

Contains 3 disulfide bonds. As to expression, expressed by the venom duct.

The protein localises to the secreted. The sequence is that of Teretoxin Tan9.6 from Terebra anilis (Auger snail).